Consider the following 197-residue polypeptide: Putative protein N5-glutamine methyltransferase MJ0928 (197 aa).

S-adenosyl-L-methionine contacts are provided by residues 42–46 (GVGTG), Asp64, and Asn105. 105 to 108 (NPPY) contributes to the substrate binding site.

This sequence belongs to the eukaryotic/archaeal PrmC-related family.

It carries out the reaction L-glutaminyl-[protein] + S-adenosyl-L-methionine = N(5)-methyl-L-glutaminyl-[protein] + S-adenosyl-L-homocysteine + H(+). Putative protein methyltransferase using S-adenosyl-L-methionine as the methyl donor. May methylate a Gln residue in target proteins. In Methanocaldococcus jannaschii (strain ATCC 43067 / DSM 2661 / JAL-1 / JCM 10045 / NBRC 100440) (Methanococcus jannaschii), this protein is Putative protein N5-glutamine methyltransferase MJ0928.